A 181-amino-acid chain; its full sequence is ATP-dependent protease subunit HslV (181 aa).

Thr7 is an active-site residue. Residues Ala162, Cys165, and Thr168 each contribute to the Na(+) site.

The protein belongs to the peptidase T1B family. HslV subfamily. As to quaternary structure, a double ring-shaped homohexamer of HslV is capped on each side by a ring-shaped HslU homohexamer. The assembly of the HslU/HslV complex is dependent on binding of ATP.

The protein localises to the cytoplasm. The enzyme catalyses ATP-dependent cleavage of peptide bonds with broad specificity.. With respect to regulation, allosterically activated by HslU binding. In terms of biological role, protease subunit of a proteasome-like degradation complex believed to be a general protein degrading machinery. The polypeptide is ATP-dependent protease subunit HslV (Coxiella burnetii (strain RSA 331 / Henzerling II)).